An 87-amino-acid chain; its full sequence is UPF0250 protein Spro_1197 (87 aa).

This sequence belongs to the UPF0250 family.

This chain is UPF0250 protein Spro_1197, found in Serratia proteamaculans (strain 568).